We begin with the raw amino-acid sequence, 465 residues long: FAD-dependent monooxygenase penM (465 aa).

A helical membrane pass occupies residues 5 to 25 (QFHVIIVGGSIAGLTLAHCLH). FAD is bound by residues E35, G49, R108, D299, and A312. A helical membrane pass occupies residues 435 to 455 (VLVLLLSALTWSCLGNMNIIM).

The protein belongs to the paxM FAD-dependent monooxygenase family. Requires FAD as cofactor.

The protein resides in the membrane. It participates in secondary metabolite biosynthesis. FAD-dependent monooxygenase; part of the gene cluster that mediates the biosynthesis of the indole diterpenes penitrems. The geranylgeranyl diphosphate (GGPP) synthase penG catalyzes the first step in penitrem biosynthesis via conversion of farnesyl pyrophosphate and isopentyl pyrophosphate into geranylgeranyl pyrophosphate (GGPP). Condensation of indole-3-glycerol phosphate with GGPP by the prenyl transferase penC then forms 3-geranylgeranylindole (3-GGI). Epoxidation by the FAD-dependent monooxygenase penM leads to a epoxidized-GGI that is substrate of the terpene cyclase penB for cyclization to yield paspaline. Paspaline is subsequently converted to 13-desoxypaxilline by the cytochrome P450 monooxygenase penP, the latter being then converted to paxilline by the cytochrome P450 monooxygenase penQ. Paxilline is converted to beta-paxitriol via C-10 ketoreduction by the short-chain dehydrogenase PC-15 which can be monoprenylated at the C-20 by the indole diterpene prenyltransferase penD. A two-step elimination (acetylation and elimination) process performed by the O-acetyltransferase PC-16 and the P.simplicissimum ptmI-ortholog not yet identified in P.crustosum, leads to the production of the prenylated form of penijanthine. The FAD-linked oxidoreductase ptmO then converts the prenylated form of penijanthine into PC-M5 which is in turn transformed into PC-M4 by the aromatic dimethylallyltransferase PC-22. A series of oxidation steps involving 4 cytochrome P450 monooxygenases (PC-21, PC-05, PC-23, PC-20) and a FAD-dependent monooxygenase (PC-14) are required for the transformation of PC-M4 to penitrems A and E. Synthesis of these final products is proposed to proceed via penitrems D and C (PC-21, PC-05, PC-14) and penitrems B and F (PC-21, PC-05, PC-14, PC-23). In Penicillium crustosum (Blue mold fungus), this protein is FAD-dependent monooxygenase penM.